The chain runs to 251 residues: Segregation and condensation protein A (251 aa).

It belongs to the ScpA family. Component of a cohesin-like complex composed of ScpA, ScpB and the Smc homodimer, in which ScpA and ScpB bind to the head domain of Smc. The presence of the three proteins is required for the association of the complex with DNA.

The protein resides in the cytoplasm. Functionally, participates in chromosomal partition during cell division. May act via the formation of a condensin-like complex containing Smc and ScpB that pull DNA away from mid-cell into both cell halves. The polypeptide is Segregation and condensation protein A (Clostridium botulinum (strain Alaska E43 / Type E3)).